A 199-amino-acid chain; its full sequence is 7-methyl-GTP pyrophosphatase (199 aa).

Aspartate 74 (proton acceptor) is an active-site residue.

This sequence belongs to the Maf family. YceF subfamily. Requires a divalent metal cation as cofactor.

The protein localises to the cytoplasm. The catalysed reaction is N(7)-methyl-GTP + H2O = N(7)-methyl-GMP + diphosphate + H(+). In terms of biological role, nucleoside triphosphate pyrophosphatase that hydrolyzes 7-methyl-GTP (m(7)GTP). May have a dual role in cell division arrest and in preventing the incorporation of modified nucleotides into cellular nucleic acids. The sequence is that of 7-methyl-GTP pyrophosphatase from Cupriavidus pinatubonensis (strain JMP 134 / LMG 1197) (Cupriavidus necator (strain JMP 134)).